The sequence spans 396 residues: Phosphoglycerate kinase (396 aa).

Substrate is bound by residues Asp21 to Asn23, Arg36, His59 to Lys62, Arg119, and Arg156. Residues Lys206, Glu325, and Gly352–Ser355 contribute to the ATP site.

Belongs to the phosphoglycerate kinase family. In terms of assembly, monomer.

It localises to the cytoplasm. The enzyme catalyses (2R)-3-phosphoglycerate + ATP = (2R)-3-phospho-glyceroyl phosphate + ADP. It participates in carbohydrate degradation; glycolysis; pyruvate from D-glyceraldehyde 3-phosphate: step 2/5. The sequence is that of Phosphoglycerate kinase from Staphylococcus saprophyticus subsp. saprophyticus (strain ATCC 15305 / DSM 20229 / NCIMB 8711 / NCTC 7292 / S-41).